Consider the following 114-residue polypeptide: Putative pterin-4-alpha-carbinolamine dehydratase (114 aa).

The protein belongs to the pterin-4-alpha-carbinolamine dehydratase family.

The enzyme catalyses (4aS,6R)-4a-hydroxy-L-erythro-5,6,7,8-tetrahydrobiopterin = (6R)-L-erythro-6,7-dihydrobiopterin + H2O. The chain is Putative pterin-4-alpha-carbinolamine dehydratase from Chlorobium luteolum (strain DSM 273 / BCRC 81028 / 2530) (Pelodictyon luteolum).